We begin with the raw amino-acid sequence, 686 residues long: U3 small nucleolar RNA-associated protein 4 homolog (686 aa).

WD repeat units follow at residues 7–50, 51–92, 93–135, 136–181, 182–226, 227–275, 276–317, 318–377, 378–427, 428–475, 476–516, 517–566, 567–627, and 628–666; these read HRVR…ANYF, QEKF…QALN, IKYA…PDKI, QFER…AVHK, MIVD…SATG, TLVK…SSEK, QWVR…LMEK, VEVK…PLSK, NADH…NISL, KRVS…KHLH, AFQP…VKQL, KLHC…WSRT, VQKQ…FPPT, and NESD…AVER. Residue K321 forms a Glycyl lysine isopeptide (Lys-Gly) (interchain with G-Cter in SUMO2) linkage.

As to quaternary structure, interacts with HIVEP1 Interacts with NOL11. Part of the small subunit (SSU) processome, composed of more than 70 proteins and the RNA chaperone small nucleolar RNA (snoRNA) U3. May be a component of the proposed t-UTP subcomplex of the ribosomal small subunit (SSU) processome containing at least UTP4, WDR43, HEATR1, UTP15, WDR75. In terms of processing, may be phosphorylated during mitosis; may control the association of this protein with WRD43 and UTP15.

Its subcellular location is the nucleus. The protein resides in the nucleolus. The protein localises to the chromosome. In terms of biological role, ribosome biogenesis factor. Involved in nucleolar processing of pre-18S ribosomal RNA. Part of the small subunit (SSU) processome, first precursor of the small eukaryotic ribosomal subunit. During the assembly of the SSU processome in the nucleolus, many ribosome biogenesis factors, an RNA chaperone and ribosomal proteins associate with the nascent pre-rRNA and work in concert to generate RNA folding, modifications, rearrangements and cleavage as well as targeted d Involved in SSU pre-rRNA processing at sites A', A0, 1 and 2b. Required for optimal pre-ribosomal RNA transcription by RNA polymerase. May be a transcriptional regulator. (Microbial infection) Acts as a positive regulator of HIVEP1 which specifically binds to the DNA sequence 5'-GGGACTTTCC-3' found in enhancer elements of numerous viral promoters such as those of HIV-1, SV40, or CMV. The chain is U3 small nucleolar RNA-associated protein 4 homolog from Homo sapiens (Human).